We begin with the raw amino-acid sequence, 81 residues long: Costars family protein ABRACL (81 aa).

The protein belongs to the costars family.

The polypeptide is Costars family protein ABRACL (Coturnix coturnix (Common quail)).